The primary structure comprises 530 residues: Chaperonin GroEL 2 (530 aa).

ATP is bound by residues 30 to 33 (TLGP), lysine 51, 87 to 91 (DGTTT), glycine 415, 479 to 481 (NAA), and aspartate 495.

Belongs to the chaperonin (HSP60) family. As to quaternary structure, forms a cylinder of 14 subunits composed of two heptameric rings stacked back-to-back. Interacts with the co-chaperonin GroES.

The protein resides in the cytoplasm. It catalyses the reaction ATP + H2O + a folded polypeptide = ADP + phosphate + an unfolded polypeptide.. Its function is as follows. Together with its co-chaperonin GroES, plays an essential role in assisting protein folding. The GroEL-GroES system forms a nano-cage that allows encapsulation of the non-native substrate proteins and provides a physical environment optimized to promote and accelerate protein folding. The polypeptide is Chaperonin GroEL 2 (Vibrio cholerae serotype O1 (strain ATCC 39315 / El Tor Inaba N16961)).